We begin with the raw amino-acid sequence, 120 residues long: uncharacterized protein (120 aa).

Residues 63–83 (IDMSCVICFNFSCHLFVVIFI) form a helical membrane-spanning segment.

It is found in the membrane. This is an uncharacterized protein from Saccharomyces cerevisiae (strain ATCC 204508 / S288c) (Baker's yeast).